The primary structure comprises 94 residues: Large ribosomal subunit protein bL27 (94 aa).

Residues 1 to 9 (MNLANLQLF) constitute a propeptide that is removed on maturation. A disordered region spans residues 11–33 (HKKGGGSTSNGRDSQAKRLGAKA).

Belongs to the bacterial ribosomal protein bL27 family. Post-translationally, the N-terminus is cleaved by ribosomal processing cysteine protease Prp.

The polypeptide is Large ribosomal subunit protein bL27 (Streptococcus agalactiae serotype V (strain ATCC BAA-611 / 2603 V/R)).